The primary structure comprises 4017 residues: Hybrid PKS-NRPS synthetase cghG (4017 aa).

Residues 6-438 (QEPIAVIGMA…GTNAHAIIES (433 aa)) form the Ketosynthase family 3 (KS3) domain. Catalysis depends on for beta-ketoacyl synthase activity residues Cys-179, His-318, and His-358. The interval 549 to 869 (VFTGQGAQWP…GRNKNDVVEL (321 aa)) is malonyl-CoA:ACP transacylase (MAT) domain. The N-terminal hotdog fold stretch occupies residues 936-1072 (NPILGRRCVE…ATLHVRFHEP (137 aa)). In terms of domain architecture, PKS/mFAS DH spans 936–1243 (NPILGRRCVE…VKPFAAATAR (308 aa)). The segment at 937-1240 (PILGRRCVET…AVQVKPFAAA (304 aa)) is dehydratase (DH) domain. The Proton acceptor; for dehydratase activity role is filled by His-969. Residues 1087–1243 (LVKTDPGRLY…VKPFAAATAR (157 aa)) form a C-terminal hotdog fold region. Asp-1147 acts as the Proton donor; for dehydratase activity in catalysis. The segment at 1398-1585 (VANVWIARMV…GVDTHCPVEK (188 aa)) is methyltransferase (MT) domain. The segment at 2127-2300 (TYFLVGLSGE…XXXXXXXXXX (174 aa)) is ketoreductase (KR)domain. One can recognise a Carrier 1 domain in the interval 2423–2499 (AVVQDSLTEN…SLAEEAMAKI (77 aa)). Ser-2458 bears the O-(pantetheine 4'-phosphoryl)serine mark. Disordered regions lie at residues 2547-2606 (VSEA…LQHR) and 2613-2632 (WAGS…AQRH). Polar residues predominate over residues 2548–2578 (SEASGVSATTPSTRAETDASSSPALVSTPGT). The tract at residues 2626–3020 (RRAAQRHETL…GDAMETEKLQ (395 aa)) is condensation. The adenylation stretch occupies residues 3053–3453 (EVIAQNPTAV…SGFLAIEGRI (401 aa)). The disordered stretch occupies residues 3567–3586 (PKTTTASTTADGTQPAQPLT). A compositionally biased stretch (low complexity) spans 3569–3579 (TTTASTTADGT). A Carrier 2 domain is found at 3583-3661 (QPLTPTESRL…SMAALLDQAG (79 aa)). The interval 3588 to 3658 (TESRLATLWA…ELGSMAALLD (71 aa)) is thiolation. An O-(pantetheine 4'-phosphoryl)serine modification is found at Ser-3621. A reductase-like region spans residues 3696–3920 (VTGASGSLGK…DVGRLEDVAA (225 aa)).

It in the C-terminal section; belongs to the NRP synthetase family.

It catalyses the reaction (2S,4S)-4-hydroxy-4-methylglutamate + 8 malonyl-CoA + 3 S-adenosyl-L-methionine + ATP + 8 NADPH + 11 H(+) = (2S)-3-[(2S)-3,5-dioxo-4-[(2E,4R,6R,8E,10E,12E)-4,6,12-trimethyltetradeca-2,8,10,12-tetraenoyl]pyrrolidin-2-yl]-2-hydroxy-2-methylpropanoate + AMP + 3 S-adenosyl-L-homocysteine + 8 CO2 + diphosphate + 8 NADP(+) + 8 CoA + 6 H2O. The protein operates within secondary metabolite biosynthesis. Its function is as follows. Hybrid PKS-NRPS synthetase; part of the gene cluster that mediates the biosynthesis of the tetramic acid Sch210972, a potential anti-HIV fungal natural product that contains a decalin core. The PKS module of cghG together with the enoylreductase cghC catalyze the formation of the polyketide unit which is then conjugated to 4-hydroxyl-4-methyl glutamate (HMG) by the condensation domain of the cghG NRPS module. One unique structural feature of Sch210972 is the tetramic acid motif proposed to be derived from the non-proteinogenic amino acid HMG, by a Dieckmann-type condensation catalyzed by the reductase domain of cghG. The aldolase cghB catalyzes the aldol condensation of 2 molecules of pyruvic acid to yield the intermediate 4-hydroxyl-4-methyl-2-oxoglutarate (HMOG), which can then be stereoselectively transaminated by an unidentified enzyme to form HMG. The Diels-Alderase cghA then uses the Dieckmann product released by cghG as substrate and catalyzes the Diels-Alder cycloaddition to form the decalin ring of Sch210972. CghA also suppresses the nonenzymatic formation of the alternative stereoisomer. The protein is Hybrid PKS-NRPS synthetase cghG of Chaetomium globosum (strain ATCC 6205 / CBS 148.51 / DSM 1962 / NBRC 6347 / NRRL 1970) (Soil fungus).